Reading from the N-terminus, the 448-residue chain is Antizyme inhibitor 1 (448 aa).

Belongs to the Orn/Lys/Arg decarboxylase class-II family. ODC antizyme inhibitor subfamily. As to quaternary structure, monomer. Interacts with OAZ1 and OAZ3; this interaction disrupts the interaction between the antizyme and ODC1. In terms of processing, ubiquitinated, leading to its proteasomal degradation; a process that is reduced in presence of antizyme OAZ1.

It localises to the nucleus. Antizyme inhibitor (AZI) protein that positively regulates ornithine decarboxylase (ODC) activity and polyamine uptake. AZI is an enzymatically inactive ODC homolog that counteracts the negative effect of ODC antizymes (AZs) OAZ1, OAZ2 and OAZ3 on ODC activity by competing with ODC for antizyme-binding. Inhibits antizyme-dependent ODC degradation and releases ODC monomers from their inactive complex with antizymes, leading to formation of the catalytically active ODC homodimer and restoring polyamine production. The protein is Antizyme inhibitor 1 (AZIN1) of Pongo abelii (Sumatran orangutan).